Reading from the N-terminus, the 319-residue chain is Annexin A4 (319 aa).

An N-acetylalanine modification is found at A2. T7 carries the post-translational modification Phosphothreonine; by PKC. S12 bears the Phosphoserine mark. 4 Annexin repeats span residues 14-85 (FNAA…GMMT), 86-157 (PTVL…SLSA), 169-241 (ALVR…AIVK), and 245-316 (NKSA…ILCG). 3 positions are modified to N6-acetyllysine: K213, K293, and K300.

It belongs to the annexin family. Monomer.

Its subcellular location is the zymogen granule membrane. Functionally, calcium/phospholipid-binding protein which promotes membrane fusion and is involved in exocytosis. In Sus scrofa (Pig), this protein is Annexin A4 (ANXA4).